A 520-amino-acid chain; its full sequence is Probable kinase 098L (520 aa).

The region spanning 82–393 (LTSVQSFGSK…NSPLLKKGFV (312 aa)) is the Protein kinase domain. ATP contacts are provided by residues 88–96 (FGSKSKQGI) and Lys111. Asp205 serves as the catalytic Proton acceptor. The stretch at 416 to 442 (QTAQLIETDKEILDNLIDDLELKIVRK) forms a coiled coil.

This sequence belongs to the protein kinase superfamily.

Probable kinase. This Aedes vexans (Inland floodwater mosquito) protein is Probable kinase 098L.